The sequence spans 738 residues: Photosystem I P700 chlorophyll a apoprotein A2 (738 aa).

Helical transmembrane passes span 46-69 (LFST…FHIA), 135-158 (LYQG…LHLQ), 175-199 (LNHH…HVAI), 273-291 (IAHH…GHMY), 333-356 (LHFQ…QHMY), 372-398 (AALY…IFFI), 420-442 (AIIS…LYVH), and 521-539 (FLVH…LILV). [4Fe-4S] cluster-binding residues include Cys-563 and Cys-572. A run of 2 helical transmembrane segments spans residues 579–600 (AFYL…YWHW) and 647–669 (LAVW…MFLI). 3 residues coordinate chlorophyll a: His-658, Met-666, and Tyr-674. Trp-675 provides a ligand contact to phylloquinone. Residues 711 to 731 (VVGLAHFTIGYILTYAAFLIA) traverse the membrane as a helical segment.

Belongs to the PsaA/PsaB family. In terms of assembly, the PsaA/B heterodimer binds the P700 chlorophyll special pair and subsequent electron acceptors. PSI consists of a core antenna complex that captures photons, and an electron transfer chain that converts photonic excitation into a charge separation. The cyanobacterial PSI reaction center is composed of one copy each of PsaA,B,C,D,E,F,I,J,K,L,M and X, and forms trimeric complexes. It depends on PSI electron transfer chain: 5 chlorophyll a, 1 chlorophyll a', 2 phylloquinones and 3 4Fe-4S clusters. PSI core antenna: 90 chlorophyll a, 22 carotenoids, 3 phospholipids and 1 galactolipid. P700 is a chlorophyll a/chlorophyll a' dimer, A0 is one or more chlorophyll a, A1 is one or both phylloquinones and FX is a shared 4Fe-4S iron-sulfur center. as a cofactor.

Its subcellular location is the cellular thylakoid membrane. It carries out the reaction reduced [plastocyanin] + hnu + oxidized [2Fe-2S]-[ferredoxin] = oxidized [plastocyanin] + reduced [2Fe-2S]-[ferredoxin]. PsaA and PsaB bind P700, the primary electron donor of photosystem I (PSI), as well as the electron acceptors A0, A1 and FX. PSI is a plastocyanin/cytochrome c6-ferredoxin oxidoreductase, converting photonic excitation into a charge separation, which transfers an electron from the donor P700 chlorophyll pair to the spectroscopically characterized acceptors A0, A1, FX, FA and FB in turn. Oxidized P700 is reduced on the lumenal side of the thylakoid membrane by plastocyanin or cytochrome c6. This is Photosystem I P700 chlorophyll a apoprotein A2 from Synechococcus sp. (strain WH7803).